A 952-amino-acid polypeptide reads, in one-letter code: Anion exchange protein 4 (952 aa).

The disordered stretch occupies residues 1 to 41 (MKLPGQGDFESSDAHENAHSEEPDSGLGPGPGLNGPSGIDI). Over residues 12-22 (SDAHENAHSEE) the composition is skewed to basic and acidic residues. Helical transmembrane passes span 385–405 (AVFYIYLATVTNAITFGGLLG), 413–433 (GVLESFLGTAVAGAAFCLMAG), 470–490 (VGIWVTAFCLALVATEASLLV), and 501–521 (FCALISLIFIYDAMGKMLNLI). Asn546 and Asn569 each carry an N-linked (GlcNAc...) asparagine glycan. Helical transmembrane passes span 593–613 (VPDIAFFSLLLFFTSFLCAIA), 634–654 (FSSVLAILLGCGLDTFLGLAT), 681–701 (PWWLSVAAALPALLLSILIFM), 727–747 (LFCVAVLMLFTSALGLPWYVS), 784–804 (GLVVFVLTGVSIFLAPVLKFI), 807–827 (PVLYGIFLYMGVAALSSIQFV), and 870–890 (VVKSTPAAIVFPLMLLGLVAI). The disordered stretch occupies residues 915–938 (ETIPENRSEPEHLFSGNDSEDSEL). Asn920, Asn931, and Asn948 each carry an N-linked (GlcNAc...) asparagine glycan.

This sequence belongs to the anion exchanger (TC 2.A.31) family. As to expression, expressed in submandibular gland (SMG) duct and cortical collecting duct (CCD) of kidney. Lower expressed in duodenal villi.

The protein resides in the basolateral cell membrane. The catalysed reaction is 2 hydrogencarbonate(out) + chloride(in) + Na(+)(out) = 2 hydrogencarbonate(in) + chloride(out) + Na(+)(in). It catalyses the reaction K(+)(in) + 2 hydrogencarbonate(in) + chloride(out) = K(+)(out) + 2 hydrogencarbonate(out) + chloride(in). It carries out the reaction Li(+)(in) + 2 hydrogencarbonate(in) + chloride(out) = Li(+)(out) + 2 hydrogencarbonate(out) + chloride(in). The enzyme catalyses Rb(+)(in) + 2 hydrogencarbonate(in) + chloride(out) = Rb(+)(out) + 2 hydrogencarbonate(out) + chloride(in). The catalysed reaction is Cs(+)(in) + 2 hydrogencarbonate(in) + chloride(out) = Cs(+)(out) + 2 hydrogencarbonate(out) + chloride(in). Cl(-)/HCO3(-) exchanger activity is substantially increased in response to 5 uM isoproterenol. Cl(-)/HCO3(-) exchanger activity is increased by both forskolin and coexpression with the catalytic subunit alpha of PKA. Electroneutral Cl(-)/HCO3(-) antiporter that favors chloride ion entry and efflux of hydrogencarbonate and sodium ion across the basolateral membrane and may participate in salivary secretion. Also mediates Cl(-)/HCO3(-) exchange activity in the presence of K(+) as well as Cs(+), Li(+), and Rb(+). Does not contribute to Cl(-)/HCO3(-) exchanger in the apical membrane of the upper villous epithelium. The sequence is that of Anion exchange protein 4 from Mus musculus (Mouse).